Here is a 91-residue protein sequence, read N- to C-terminus: Small ribosomal subunit protein uS15 (91 aa).

This sequence belongs to the universal ribosomal protein uS15 family. Part of the 30S ribosomal subunit. Forms a bridge to the 50S subunit in the 70S ribosome, contacting the 23S rRNA.

In terms of biological role, one of the primary rRNA binding proteins, it binds directly to 16S rRNA where it helps nucleate assembly of the platform of the 30S subunit by binding and bridging several RNA helices of the 16S rRNA. Its function is as follows. Forms an intersubunit bridge (bridge B4) with the 23S rRNA of the 50S subunit in the ribosome. This Rickettsia akari (strain Hartford) protein is Small ribosomal subunit protein uS15.